Consider the following 473-residue polypeptide: Presenilin-B (473 aa).

The tract at residues 1–141 is disordered; the sequence is MSSDNNNDPF…PLLNKKEKDD (141 aa). Residues 1–164 lie on the Cytoplasmic side of the membrane; that stretch reads MSSDNNNDPF…DDEVSLQDFS (164 aa). Residues 22–46 are compositionally biased toward polar residues; that stretch reads RVSTTTSPNRQSINSSPKQSSPKST. A compositionally biased stretch (low complexity) spans 54 to 72; the sequence is NIILDLNDNNNDNNNTNNY. Over residues 79–89 the composition is skewed to basic and acidic residues; the sequence is VDNKNKFENKD. The helical transmembrane segment at 165-185 threads the bilayer; it reads SMIVSIIIPVSITMMAVVFFV. Residues 186 to 224 are Lumenal-facing; sequence KYLNNQTLYASTLSYTIAGGSSGGGSGADSITGNSFVDS. Residue N190 is glycosylated (N-linked (GlcNAc...) asparagine). The helical transmembrane segment at 225-245 threads the bilayer; it reads LIVAGIVLGMIIVTTVAFVLL. Topologically, residues 246–252 are cytoplasmic; sequence YKYRCLK. The helical transmembrane segment at 253–273 threads the bilayer; it reads ILYGWLFLSVGMMLGSFGTTF. Residues 274–286 lie on the Lumenal side of the membrane; sequence FQAMLSAANLPLD. The chain crosses the membrane as a helical span at residues 287–307; the sequence is YITFAFLIFNFTVCGIIGVFW. Position 308 (Y308) is a topological domain, cytoplasmic. The chain crosses the membrane as a helical span at residues 309–329; it reads AHQYVNQLYLVIISVLMAISL. Over 330-334 the chain is Lumenal; sequence TRLPQ. Residues 335 to 355 form a helical membrane-spanning segment; sequence WTIFTLLVIVAIYDLFAVLCP. D348 is an active-site residue. At 356 to 389 the chain is on the cytoplasmic side; it reads RGPLKVLVELSQERNENIPALVYETGKGSDSNLK. A helical membrane pass occupies residues 390–410; sequence LGLGDFIFYSLLISRAALVHM. D394 is a catalytic residue. Residues 411–413 lie on the Lumenal side of the membrane; the sequence is SCV. The chain crosses the membrane as a helical span at residues 414-434; the sequence is FSTFIAILTGLFLTLLCLAIF. At 435-442 the chain is on the cytoplasmic side; the sequence is KKALPALP. Positions 439-441 match the PAL motif; the sequence is PAL. Residues 443-463 constitute an intramembrane region (helical); it reads ISIFLGILFYYLSNNFLTPFI. The Cytoplasmic portion of the chain corresponds to 464 to 473; that stretch reads EALTLSQIFV.

The protein belongs to the peptidase A22A family. Homodimer. Component of the gamma-secretase complex, a complex composed of a presenilin homodimer, nicastrin, aph1 and pen2.

The protein resides in the endoplasmic reticulum membrane. The protein localises to the golgi apparatus membrane. In terms of biological role, probable catalytic subunit of the gamma-secretase complex, an endoprotease complex that catalyzes the intramembrane cleavage of integral membrane proteins such as Notch receptors. Requires the other members of the gamma-secretase complex to have a protease activity. This is Presenilin-B (psenB) from Dictyostelium discoideum (Social amoeba).